The primary structure comprises 87 residues: Kappa-3-bungarotoxin (87 aa).

The first 21 residues, 1 to 21 (MKTLLLSLVVVTIVCLDLGYT), serve as a signal peptide directing secretion. 5 disulfides stabilise this stretch: Cys-24–Cys-42, Cys-35–Cys-63, Cys-48–Cys-52, Cys-67–Cys-79, and Cys-80–Cys-85.

This sequence belongs to the three-finger toxin family. Long-chain subfamily. Kappa-neurotoxin sub-subfamily. Homodimer and heterodimer with kappa 2-bungarotoxin; non-covalently-linked. As to expression, expressed by the venom gland.

It localises to the secreted. Its function is as follows. Postsynaptic neurotoxin that binds and inhibits neuronal nicotinic acetylcholine receptors (nAChR) with high affinity (IC(50)&lt;100 nM). Is a selective, and slowly reversible antagonist of alpha-3/CHRNA3-containing and some alpha-4/CHRNA4-containing AChRs. This Bungarus multicinctus (Many-banded krait) protein is Kappa-3-bungarotoxin.